The chain runs to 329 residues: NAD kinase (329 aa).

Residues 1–26 (MTTPGTDHNADQGADSGDKATKAASG) are disordered. Aspartate 104 serves as the catalytic Proton acceptor. NAD(+) contacts are provided by residues 104–105 (DG), arginine 109, 179–180 (NE), aspartate 209, and 220–225 (TAYAFS).

The protein belongs to the NAD kinase family. A divalent metal cation serves as cofactor.

The protein resides in the cytoplasm. The catalysed reaction is NAD(+) + ATP = ADP + NADP(+) + H(+). In terms of biological role, involved in the regulation of the intracellular balance of NAD and NADP, and is a key enzyme in the biosynthesis of NADP. Catalyzes specifically the phosphorylation on 2'-hydroxyl of the adenosine moiety of NAD to yield NADP. In Corynebacterium jeikeium (strain K411), this protein is NAD kinase.